The chain runs to 86 residues: F(1)-ATPase inhibitor STF1, mitochondrial (86 aa).

The N-terminal 23 residues, 1–23 (MLNRCISRNTRLPVNLRIASRFY), are a transit peptide targeting the mitochondrion. S24 bears the Phosphoserine mark.

The protein belongs to the ATPase inhibitor family. Monomer and homodimer. Monomeric at pH 5.0 and dimeric at either pH 6.5 or 8.0. The protein aggregates increasingly strongly with increasing pH.

It localises to the mitochondrion. In terms of biological role, endogenous low-affinity ATPase inhibitor, which inhibits specifically the reverse ATPase reaction of mitochondrial F(1)F(0)-type ATP synthase. Found to stabilize, together with STF2, a complex of intrinsic ATPase inhibitor INH1 and proton-translocating ATPase in mitochondrial membranes. Binds directly to purified F1-ATPase. In Saccharomyces cerevisiae (strain ATCC 204508 / S288c) (Baker's yeast), this protein is F(1)-ATPase inhibitor STF1, mitochondrial (STF1).